The sequence spans 265 residues: Shikimate dehydrogenase (NADP(+)) (265 aa).

Shikimate-binding positions include 15 to 17 (SKS) and threonine 62. Lysine 66 functions as the Proton acceptor in the catalytic mechanism. Asparagine 87 and aspartate 102 together coordinate shikimate. Residues 127 to 131 (GAGGA), 151 to 156 (NRTVSR), and methionine 212 contribute to the NADP(+) site. Shikimate is bound at residue tyrosine 214. Glycine 234 provides a ligand contact to NADP(+).

The protein belongs to the shikimate dehydrogenase family. As to quaternary structure, homodimer.

It carries out the reaction shikimate + NADP(+) = 3-dehydroshikimate + NADPH + H(+). Its pathway is metabolic intermediate biosynthesis; chorismate biosynthesis; chorismate from D-erythrose 4-phosphate and phosphoenolpyruvate: step 4/7. In terms of biological role, involved in the biosynthesis of the chorismate, which leads to the biosynthesis of aromatic amino acids. Catalyzes the reversible NADPH linked reduction of 3-dehydroshikimate (DHSA) to yield shikimate (SA). The chain is Shikimate dehydrogenase (NADP(+)) from Thiobacillus denitrificans (strain ATCC 25259 / T1).